The following is a 262-amino-acid chain: LOB domain-containing protein 18 (262 aa).

In terms of domain architecture, LOB spans 36–138 (GPCGACKFLR…AEVSYLQAHL (103 aa)). The disordered stretch occupies residues 223–262 (VGLGGENSHDLQALAHELLHRQGSPPPAATDHSPSRTMSR).

Belongs to the LOB domain-containing protein family. Homodimer and heterodimer with LBD16. Interacts with GIP1. Expressed in roots, stems, leaves and flowers. Expressed in vascular tissues of hypocotyls, leaves, roots, developing floral organs and siliques.

It localises to the nucleus. In terms of biological role, involved in the positive regulation of tracheary element (TE) differentiation. Involved in a positive feedback loop that maintains or promotes NAC030/VND7 expression that regulates TE differentiation-related genes. Functions in the initiation and emergence of lateral roots, in conjunction with LBD16, downstream of ARF7 and ARF19. Transcriptional activator that directly regulates EXPA14, a gene encoding a cell wall-loosening factor that promotes lateral root emergence. Activates EXPA14 by directly binding to a specific region of its promoter. Transcriptional activator that directly regulates EXPA17, a gene encoding a cell wall-loosening factor that promotes lateral root emergence. Acts downstream of the auxin influx carriers AUX1 and LAX1 in the regulation of lateral root initiation and development. The sequence is that of LOB domain-containing protein 18 (LBD18) from Arabidopsis thaliana (Mouse-ear cress).